Reading from the N-terminus, the 540-residue chain is Coiled-coil domain-containing protein 116 (540 aa).

Positions 79–102 (QVLDSLQTVVEQATECVATMKTEA) form a coiled coil. Residues 347–400 (PGNSDLQPSSKASLPTDREARGETCYSPTSASSPKTSHRKSKDRRGSPSNAVQM) are disordered. Composition is skewed to polar residues over residues 350 to 359 (SDLQPSSKAS) and 372 to 381 (YSPTSASSPK). S393 bears the Phosphoserine mark.

The protein resides in the cytoplasm. The protein localises to the cytoskeleton. It is found in the microtubule organizing center. Its subcellular location is the centrosome. This chain is Coiled-coil domain-containing protein 116 (Ccdc116), found in Rattus norvegicus (Rat).